A 194-amino-acid polypeptide reads, in one-letter code: A-type ATP synthase subunit E (194 aa).

This sequence belongs to the V-ATPase E subunit family. Has multiple subunits with at least A(3), B(3), C, D, E, F, H, I and proteolipid K(x).

The protein localises to the cell membrane. Its function is as follows. Component of the A-type ATP synthase that produces ATP from ADP in the presence of a proton gradient across the membrane. The chain is A-type ATP synthase subunit E from Saccharolobus islandicus (strain M.16.27) (Sulfolobus islandicus).